The sequence spans 173 residues: uncharacterized protein (173 aa).

The first 20 residues, 1-20 (MWYKVLGIVSLCSVYVSTQG), serve as a signal peptide directing secretion. N53 carries an N-linked (GlcNAc...) asparagine glycan.

Component of the acid-insoluble organic matrix of calcified shell layers (at protein level).

The protein resides in the secreted. This is an uncharacterized protein from Haliotis asinina (Donkey's ear abalone).